A 445-amino-acid polypeptide reads, in one-letter code: mRNA cleavage and polyadenylation factor CLP1 (445 aa).

ATP contacts are provided by residues glutamate 33 and 131 to 136 (SSGKTS).

This sequence belongs to the Clp1 family. Clp1 subfamily. Component of a pre-mRNA cleavage factor complex. Interacts directly with PCF11.

It is found in the nucleus. In terms of biological role, required for endonucleolytic cleavage during polyadenylation-dependent pre-mRNA 3'-end formation. The polypeptide is mRNA cleavage and polyadenylation factor CLP1 (Eremothecium gossypii (strain ATCC 10895 / CBS 109.51 / FGSC 9923 / NRRL Y-1056) (Yeast)).